Here is a 198-residue protein sequence, read N- to C-terminus: 7-methyl-GTP pyrophosphatase (198 aa).

Catalysis depends on aspartate 72, which acts as the Proton acceptor.

Belongs to the Maf family. YceF subfamily. A divalent metal cation serves as cofactor.

The protein localises to the cytoplasm. The enzyme catalyses N(7)-methyl-GTP + H2O = N(7)-methyl-GMP + diphosphate + H(+). Functionally, nucleoside triphosphate pyrophosphatase that hydrolyzes 7-methyl-GTP (m(7)GTP). May have a dual role in cell division arrest and in preventing the incorporation of modified nucleotides into cellular nucleic acids. This chain is 7-methyl-GTP pyrophosphatase, found in Idiomarina loihiensis (strain ATCC BAA-735 / DSM 15497 / L2-TR).